Reading from the N-terminus, the 311-residue chain is Olfactory receptor 2Y1 (311 aa).

Over 1 to 25 the chain is Extracellular; it reads MGSFNTSFEDGFILVGFSDWPQLEP. N-linked (GlcNAc...) asparagine glycosylation is present at asparagine 5. The helical transmembrane segment at 26–49 threads the bilayer; that stretch reads ILFVFIFIFYSLTLFGNTIIIALS. Topologically, residues 50–57 are cytoplasmic; sequence WLDLRLHT. The chain crosses the membrane as a helical span at residues 58–79; that stretch reads PMYFFLSHLSLLDLCFTTSTVP. Topologically, residues 80-100 are extracellular; sequence QLLINLCGVDRTITRGGCVAQ. Cysteine 97 and cysteine 188 are oxidised to a cystine. Residues 101–120 form a helical membrane-spanning segment; that stretch reads LFIYLALGSTECVLLVVMAF. At 121-139 the chain is on the cytoplasmic side; that stretch reads DRYAAVCRPLHYMAIMHPH. The chain crosses the membrane as a helical span at residues 140 to 158; the sequence is LCQTLAIASWGAGFVNSLI. Topologically, residues 159-194 are extracellular; the sequence is QTGLAMAMPLCGHRLNHFFCEMPVFLKLACADTEGT. The chain crosses the membrane as a helical span at residues 195–218; it reads EAKMFVARVIVVAVPAALILGSYV. Topologically, residues 219–235 are cytoplasmic; sequence HIAHAVLRVKSTAGRRK. Residues 236-258 traverse the membrane as a helical segment; that stretch reads AFGTCGSHLLVVFLFYGSAIYTY. Residues 259–271 lie on the Extracellular side of the membrane; it reads LQSIHNYSEREGK. Asparagine 264 carries N-linked (GlcNAc...) asparagine glycosylation. Residues 272 to 291 traverse the membrane as a helical segment; that stretch reads FVALFYTIITPILNPLIYTL. The Cytoplasmic segment spans residues 292–311; the sequence is RNKDVKGALWKVLWRGRDSG.

This sequence belongs to the G-protein coupled receptor 1 family.

It localises to the cell membrane. Functionally, odorant receptor. The polypeptide is Olfactory receptor 2Y1 (OR2Y1) (Homo sapiens (Human)).